A 496-amino-acid polypeptide reads, in one-letter code: Angiopoietin-2 (496 aa).

The signal sequence occupies residues Met1–Ala18. N-linked (GlcNAc...) asparagine glycosylation is found at Asn89, Asn119, Asn133, Asn151, Asn240, and Asn304. Residues Asn130 to Val255 adopt a coiled-coil conformation. The Fibrinogen C-terminal domain maps to Lys275–Asp495. Cys284 and Cys313 are joined by a disulfide. Ca(2+) contacts are provided by Asp429, Asp431, Cys433, and Cys435. Intrachain disulfides connect Cys433-Cys435 and Cys437-Cys450.

In terms of assembly, interacts with TEK/TIE2, competing for the same binding site as ANGPT1. Interacts with ITGA5. Interacts with SVEP1/polydom. Interacts with THBD; this interaction significantly inhibits the generation of activated PC and TAFIa/CPB2 by the thrombin/thrombomodulin complex.

It localises to the secreted. In terms of biological role, binds to TEK/TIE2, competing for the ANGPT1 binding site, and modulating ANGPT1 signaling. Can induce tyrosine phosphorylation of TEK/TIE2 in the absence of ANGPT1. In the absence of angiogenic inducers, such as VEGF, ANGPT2-mediated loosening of cell-matrix contacts may induce endothelial cell apoptosis with consequent vascular regression. In concert with VEGF, it may facilitate endothelial cell migration and proliferation, thus serving as a permissive angiogenic signal. Involved in the regulation of lymphangiogenesis. This chain is Angiopoietin-2 (ANGPT2), found in Sus scrofa (Pig).